Here is a 640-residue protein sequence, read N- to C-terminus: Threonine--tRNA ligase (640 aa).

The TGS domain occupies 1–61; it reads MPIITLPDGS…ERDATLQIIT (61 aa). The catalytic stretch occupies residues 242-533; sequence DHRRIGKQLD…LIEHYAGAFP (292 aa). 3 residues coordinate Zn(2+): Cys-333, His-384, and His-510.

Belongs to the class-II aminoacyl-tRNA synthetase family. In terms of assembly, homodimer. Zn(2+) serves as cofactor.

The protein localises to the cytoplasm. It carries out the reaction tRNA(Thr) + L-threonine + ATP = L-threonyl-tRNA(Thr) + AMP + diphosphate + H(+). Its function is as follows. Catalyzes the attachment of threonine to tRNA(Thr) in a two-step reaction: L-threonine is first activated by ATP to form Thr-AMP and then transferred to the acceptor end of tRNA(Thr). Also edits incorrectly charged L-seryl-tRNA(Thr). The sequence is that of Threonine--tRNA ligase from Pseudomonas paraeruginosa (strain DSM 24068 / PA7) (Pseudomonas aeruginosa (strain PA7)).